A 178-amino-acid chain; its full sequence is C-phycoerythrin class 2 subunit beta (178 aa).

Phycourobilin is bound by residues C50 and C61. C82 and C159 together coordinate (2R,3E)-phycoerythrobilin.

The protein belongs to the phycobiliprotein family. Heterodimer of an alpha and a beta chain. In terms of processing, contains two covalently linked phycoerythrobilin chromophores and one covalently linked phycourobilin chromophore.

It is found in the cellular thylakoid membrane. Light-harvesting photosynthetic bile pigment-protein from the phycobiliprotein complex. The protein is C-phycoerythrin class 2 subunit beta (mpeB) of Synechococcus sp. (strain WH8020).